The primary structure comprises 192 residues: Signal peptidase complex catalytic subunit SEC11C (192 aa).

Topologically, residues 1 to 28 (MVRAGAVGAHLPASGLDIFGDLKKMNKR) are cytoplasmic. Residues 29 to 48 (QLYYQVLNFAMIVSSALMIW) form a helical; Signal-anchor for type II membrane protein membrane-spanning segment. Topologically, residues 49-192 (KGLIVLTGSE…GAYVLLKRES (144 aa)) are lumenal. Residues Ser-68, His-108, and Asp-134 each act as charge relay system in the active site. The interval 177–188 (ALLAVMGAYVLL) is C-terminal short (CTS) helix.

It belongs to the peptidase S26B family. As to quaternary structure, component of the signal peptidase complex paralog C (SPC-C) composed of a catalytic subunit SEC11C and three accessory subunits SPCS1, SPCS2 and SPCS3. Within the complex, interacts with SPCS2 and SPCS3. The complex induces a local thinning of the ER membrane which is used to measure the length of the signal peptide (SP) h-region of protein substrates. This ensures the selectivity of the complex towards h-regions shorter than 18-20 amino acids. May undergo processing at the N-terminus.

The protein localises to the endoplasmic reticulum membrane. The catalysed reaction is Cleavage of hydrophobic, N-terminal signal or leader sequences from secreted and periplasmic proteins.. In terms of biological role, catalytic component of the signal peptidase complex (SPC) which catalyzes the cleavage of N-terminal signal sequences from nascent proteins as they are translocated into the lumen of the endoplasmic reticulum. Specifically cleaves N-terminal signal peptides that contain a hydrophobic alpha-helix (h-region) shorter than 18-20 amino acids. This Homo sapiens (Human) protein is Signal peptidase complex catalytic subunit SEC11C (SEC11C).